We begin with the raw amino-acid sequence, 141 residues long: Large ribosomal subunit protein uL11 (141 aa).

The protein belongs to the universal ribosomal protein uL11 family. In terms of assembly, part of the ribosomal stalk of the 50S ribosomal subunit. Interacts with L10 and the large rRNA to form the base of the stalk. L10 forms an elongated spine to which L12 dimers bind in a sequential fashion forming a multimeric L10(L12)X complex. One or more lysine residues are methylated.

In terms of biological role, forms part of the ribosomal stalk which helps the ribosome interact with GTP-bound translation factors. In Leptospira biflexa serovar Patoc (strain Patoc 1 / Ames), this protein is Large ribosomal subunit protein uL11.